Consider the following 382-residue polypeptide: Gap junction alpha-1 protein (382 aa).

Residues 2-23 (GDWSALGKLLDKVQAYSTAGGK) lie on the Cytoplasmic side of the membrane. S5 carries the post-translational modification Phosphoserine. The chain crosses the membrane as a helical span at residues 24-44 (VWLSVLFIFRILLLGTAVESA). Over 45-76 (WGDEQSAFRCNTQQPGCENVCYDKSFPISHVR) the chain is Extracellular. 2 disulfide bridges follow: C54/C192 and C187/C198. Residues 77–97 (FWVLQIIFVSVPTLLYLAHVF) form a helical membrane-spanning segment. At 98–155 (YVMRKEEKLNKKEEELKVAQTDGANVDMHLKQIEIKKFKYGIEEHGKVKMRGGLLRTY) the chain is on the cytoplasmic side. K144 is covalently cross-linked (Glycyl lysine isopeptide (Lys-Gly) (interchain with G-Cter in SUMO)). The chain crosses the membrane as a helical span at residues 156 to 176 (IISILFKSVFEVAFLLIQWYI). Topologically, residues 177–207 (YGFSLSAVYTCKRDPCPHQVDCFLSRPTEKT) are extracellular. Residues 208–228 (IFIIFMLVVSLVSLALNIIEL) form a helical membrane-spanning segment. Residues 229–382 (FYVFFKGIKD…SRPRPDDLEI (154 aa)) lie on the Cytoplasmic side of the membrane. K237 is covalently cross-linked (Glycyl lysine isopeptide (Lys-Gly) (interchain with G-Cter in SUMO)). Residues 244–382 (SDLYHATTGP…SRPRPDDLEI (139 aa)) form an interaction with NOV region. Phosphotyrosine is present on Y247. Phosphoserine is present on residues S255, S257, and S262. The segment at 264-382 (TYAYFNGCSS…SRPRPDDLEI (119 aa)) is interaction with UBQLN4. The residue at position 271 (C271) is an S-nitrosocysteine. T275 is subject to Phosphothreonine. S306 and S314 each carry phosphoserine. Residues 317-332 (QNRMGQAGSTISNSHA) show a composition bias toward polar residues. The disordered stretch occupies residues 317–382 (QNRMGQAGST…SRPRPDDLEI (66 aa)). The residue at position 325 (S325) is a Phosphoserine; by CK1. Position 326 is a phosphothreonine (T326). 2 positions are modified to phosphoserine; by CK1: S328 and S330. A phosphoserine mark is found at S344 and S365. The segment covering 362-374 (RPSSRASSRASSR) has biased composition (low complexity). S368 carries the post-translational modification Phosphoserine; by PKC/PRKCG and PKC/PRKCD. A phosphoserine mark is found at S369 and S373.

Belongs to the connexin family. Alpha-type (group II) subfamily. In terms of assembly, a connexon is composed of a hexamer of connexins. Interacts with SGSM3. Interacts with RIC1/CIP150. Interacts with CNST and CSNK1D. Interacts (via C-terminus) with TJP1. Interacts (via C-terminus) with SRC (via SH3 domain). Interacts (not ubiquitinated) with UBQLN4 (via UBA domain). Interacts with NOV. Interacts with TMEM65. Interacts with ANK3/ANKG and PKP2. Post-translationally, phosphorylation at Ser-325, Ser-328 and Ser-330 by CK1 modulates gap junction assembly. Phosphorylated at Ser-368 by PRKCG; phosphorylation induces disassembly of gap junction plaques and inhibition of gap junction activity. Phosphorylation at Ser-368 by PRKCD triggers its internalization into small vesicles leading to proteasome-mediated degradation. Sumoylated with SUMO1, SUMO2 and SUMO3, which may regulate the level of functional Cx43 gap junctions at the plasma membrane. May be desumoylated by SENP1 or SENP2. In terms of processing, S-nitrosylation at Cys-271 is enriched at the muscle endothelial gap junction in arteries, it augments channel permeability and may regulate of smooth muscle cell to endothelial cell communication. Post-translationally, acetylated in the developing cortex; leading to delocalization from the cell membrane.

It localises to the cell membrane. The protein localises to the cell junction. The protein resides in the gap junction. It is found in the endoplasmic reticulum. Gap junction protein that acts as a regulator of bladder capacity. A gap junction consists of a cluster of closely packed pairs of transmembrane channels, the connexons, through which materials of low MW diffuse from one cell to a neighboring cell. May play a critical role in the physiology of hearing by participating in the recycling of potassium to the cochlear endolymph. Negative regulator of bladder functional capacity: acts by enhancing intercellular electrical and chemical transmission, thus sensitizing bladder muscles to cholinergic neural stimuli and causing them to contract. May play a role in cell growth inhibition through the regulation of NOV expression and localization. Plays an essential role in gap junction communication in the ventricles. In Erinaceus europaeus (Western European hedgehog), this protein is Gap junction alpha-1 protein (GJA1).